A 405-amino-acid polypeptide reads, in one-letter code: Polyadenylate-binding protein RBP45B (405 aa).

Pro residues predominate over residues 1-19 (MMQQPPPGGILPHHAPPPS). Residues 1–54 (MMQQPPPGGILPHHAPPPSAQQQYGYQQPYGIAGAAPPPPQMWNPQAAAPPSVQ) form a disordered region. Low complexity predominate over residues 20–35 (AQQQYGYQQPYGIAGA). RRM domains are found at residues 62 to 143 (RTLW…WASL), 155 to 234 (YTIF…PAAS), and 261 to 333 (TTVF…WGRS). Positions 379–405 (GGYQQTPQAGQQPPQQPPQQQQVGFSY) are disordered. Over residues 380–405 (GYQQTPQAGQQPPQQPPQQQQVGFSY) the composition is skewed to low complexity.

It belongs to the polyadenylate-binding RBP45 family. Both isoform 1 and isoform 2 interact with poly(A)+ RNA in nucleus. In terms of tissue distribution, expressed in roots, leaves, stems, flowers, siliques, and seedlings. Present in immature anther tissues (tapetum cells) and mature pollen grains.

Its subcellular location is the nucleus. Its function is as follows. Heterogeneous nuclear ribonucleoprotein (hnRNP)-protein binding the poly(A) tail of mRNA and probably involved in some steps of pre-mRNA maturation. The polypeptide is Polyadenylate-binding protein RBP45B (RBP45B) (Arabidopsis thaliana (Mouse-ear cress)).